A 419-amino-acid chain; its full sequence is S-adenosylmethionine synthase (419 aa).

His-15 provides a ligand contact to ATP. Asp-17 is a Mg(2+) binding site. Glu-43 provides a ligand contact to K(+). Residues Glu-56 and Gln-100 each contribute to the L-methionine site. A flexible loop region spans residues 100-110 (QSPDIAQGVNE). ATP is bound by residues 171–173 (DGK), 248–249 (KF), Asp-257, 263–264 (RK), Ala-280, and Lys-284. Asp-257 provides a ligand contact to L-methionine. L-methionine is bound at residue Lys-288.

Belongs to the AdoMet synthase family. In terms of assembly, homotetramer; dimer of dimers. Requires Mg(2+) as cofactor. It depends on K(+) as a cofactor.

Its subcellular location is the cytoplasm. The catalysed reaction is L-methionine + ATP + H2O = S-adenosyl-L-methionine + phosphate + diphosphate. Its pathway is amino-acid biosynthesis; S-adenosyl-L-methionine biosynthesis; S-adenosyl-L-methionine from L-methionine: step 1/1. Its function is as follows. Catalyzes the formation of S-adenosylmethionine (AdoMet) from methionine and ATP. The overall synthetic reaction is composed of two sequential steps, AdoMet formation and the subsequent tripolyphosphate hydrolysis which occurs prior to release of AdoMet from the enzyme. In Prochlorococcus marinus (strain MIT 9313), this protein is S-adenosylmethionine synthase.